We begin with the raw amino-acid sequence, 205 residues long: Small ribosomal subunit protein uS4c (205 aa).

One can recognise an S4 RNA-binding domain in the interval methionine 93–leucine 156.

Belongs to the universal ribosomal protein uS4 family. In terms of assembly, part of the 30S ribosomal subunit. Contacts protein S5. The interaction surface between S4 and S5 is involved in control of translational fidelity.

It localises to the plastid. The protein localises to the chloroplast. In terms of biological role, one of the primary rRNA binding proteins, it binds directly to 16S rRNA where it nucleates assembly of the body of the 30S subunit. With S5 and S12 plays an important role in translational accuracy. The sequence is that of Small ribosomal subunit protein uS4c (rps4) from Mesostigma viride (Green alga).